A 399-amino-acid chain; its full sequence is Subtilisin-like protease 4 (399 aa).

The signal sequence occupies residues 1–19 (MVCLKTLSVFLAAFAAADA). A propeptide spanning residues 20–118 (RAVFKTQGHK…VEQDQVVRIS (99 aa)) is cleaved from the precursor. The region spanning 38–117 (YIVVMKDGVS…YVEQDQVVRI (80 aa)) is the Inhibitor I9 domain. A glycan (N-linked (GlcNAc...) asparagine) is linked at asparagine 102. In terms of domain architecture, Peptidase S8 spans 128–399 (SWGLGRVSHR…NRLLYNGSGQ (272 aa)). Catalysis depends on charge relay system residues aspartate 160 and histidine 191. Asparagine 252 and asparagine 308 each carry an N-linked (GlcNAc...) asparagine glycan. Catalysis depends on serine 346, which acts as the Charge relay system. The N-linked (GlcNAc...) asparagine glycan is linked to asparagine 395.

Belongs to the peptidase S8 family.

The protein resides in the secreted. Its function is as follows. Secreted subtilisin-like serine protease with keratinolytic activity that contributes to pathogenicity. In Trichophyton tonsurans (Scalp ringworm fungus), this protein is Subtilisin-like protease 4 (SUB4).